Consider the following 374-residue polypeptide: Putative G-protein coupled receptor-like protein B0244.6 (374 aa).

Residues 1–54 are Extracellular-facing; that stretch reads MTQNHYTTSIFANCSKHYEFEILLETCTNSTNPCHAVSQIQSAITIAYVDYYTS. A helical membrane pass occupies residues 55–75; it reads VALFSIAALLDIYCLIITIPL. Residues 76–86 are Cytoplasmic-facing; it reads YRRMKDDSKKK. A helical membrane pass occupies residues 87–107; the sequence is YVFLITRCISGLLLVVAWLLI. Residues 108–137 lie on the Extracellular side of the membrane; that stretch reads QCIYLRFIAPSQDNLPYYVLALALNIGSTY. The helical transmembrane segment at 138 to 158 threads the bilayer; the sequence is VLLGSYVGMAGILYLGVLNPI. The Cytoplasmic portion of the chain corresponds to 159–169; that stretch reads AFNQHLTLRIV. A helical transmembrane segment spans residues 170 to 190; that stretch reads YIAVCIIFVISIFISIPLAIF. Topologically, residues 191-216 are extracellular; sequence QALMTVPTSSMSCTDTACAPLITLIN. Residues 217 to 237 form a helical membrane-spanning segment; the sequence is FVLVFGSLITTTLTLTFVLIS. The Cytoplasmic portion of the chain corresponds to 238–262; that stretch reads LCRHRKEFKKLDTTSNTSLNSAVRL. Residues 263-283 traverse the membrane as a helical segment; sequence LKFTLFAVLLLVAAEVIPFVI. At 284 to 304 the chain is on the extracellular side; the sequence is SETKKKHSVVTGCYYFYHSGK. The helical transmembrane segment at 305–325 threads the bilayer; that stretch reads VIQYAVFALTESSIWSIALII. Topologically, residues 326 to 374 are cytoplasmic; that stretch reads DPLINIIFDRTVSKKATDQVKWMRKSCVGLVRKVTKRSNPENFTETSEI.

It belongs to the G-protein coupled receptor 1 family. B0244 subfamily.

The protein localises to the cell membrane. This is Putative G-protein coupled receptor-like protein B0244.6 from Caenorhabditis elegans.